Reading from the N-terminus, the 714-residue chain is Polyribonucleotide nucleotidyltransferase (714 aa).

2 residues coordinate Mg(2+): Asp487 and Asp493. Positions 554–613 (PRIETLKIPTDKIREVIGTGGKVIREIVEKTGAKINIEDDGTVKVASSDGNSIKAAIAWI) constitute a KH domain. In terms of domain architecture, S1 motif spans 623–691 (GQIYEGTVVK…DRGKVRLSMR (69 aa)).

Belongs to the polyribonucleotide nucleotidyltransferase family. Requires Mg(2+) as cofactor.

The protein localises to the cytoplasm. It carries out the reaction RNA(n+1) + phosphate = RNA(n) + a ribonucleoside 5'-diphosphate. Functionally, involved in mRNA degradation. Catalyzes the phosphorolysis of single-stranded polyribonucleotides processively in the 3'- to 5'-direction. In Methylocella silvestris (strain DSM 15510 / CIP 108128 / LMG 27833 / NCIMB 13906 / BL2), this protein is Polyribonucleotide nucleotidyltransferase.